The following is a 574-amino-acid chain: Egalitarian protein homolog (574 aa).

The segment at 259-278 (LNEDGSENGSDEGEETNNNG) is disordered. Acidic residues predominate over residues 262–273 (DGSENGSDEGEE). Residues 312-414 (NMEKKVVGLD…SLLQHEKFNK (103 aa)) form the 3'-5' exonuclease domain.

Component of a dynein-regulating complex composed of at least bicd-1, dlc-1 and egal-1.

It is found in the nucleus envelope. Functionally, part of a complex with bicd-1 and dlc-1, which is recruited to the nuclear envelope by unc-83, where in turn, it recruits dynein to the nuclear surface and regulates nuclear migration in hypodermal precursor cells. The polypeptide is Egalitarian protein homolog (Caenorhabditis elegans).